The chain runs to 239 residues: Probable transcriptional regulatory protein ACL_0044 (239 aa).

Belongs to the TACO1 family.

The protein localises to the cytoplasm. This chain is Probable transcriptional regulatory protein ACL_0044, found in Acholeplasma laidlawii (strain PG-8A).